The primary structure comprises 203 residues: Large ribosomal subunit protein bL25 (203 aa).

Belongs to the bacterial ribosomal protein bL25 family. CTC subfamily. In terms of assembly, part of the 50S ribosomal subunit; part of the 5S rRNA/L5/L18/L25 subcomplex. Contacts the 5S rRNA. Binds to the 5S rRNA independently of L5 and L18.

This is one of the proteins that binds to the 5S RNA in the ribosome where it forms part of the central protuberance. In Cereibacter sphaeroides (strain ATCC 17029 / ATH 2.4.9) (Rhodobacter sphaeroides), this protein is Large ribosomal subunit protein bL25.